Here is a 69-residue protein sequence, read N- to C-terminus: Pancreatic propolypeptide YG (69 aa).

The protein belongs to the NPY family.

It localises to the secreted. This Lophius americanus (American angler) protein is Pancreatic propolypeptide YG.